We begin with the raw amino-acid sequence, 261 residues long: Undecaprenyl-diphosphatase (261 aa).

7 helical membrane passes run 38–58 (RSDFFNIVIQAGAILAITFVF), 75–95 (RDYVMKLATAFLITAVVGLAV), 106–126 (IQPIAWALIIGGIWILIAESV), 136–156 (VTWSVAIAVGLAQVVAGVFPG), 181–201 (FSFLVGIPTMFSASSYACFEL), 217–237 (VAFVAAMLTGFAVVKWLLGYI), and 241–261 (SFAPFAYYRIALGLVLLTWLT).

This sequence belongs to the UppP family.

It localises to the cell inner membrane. The catalysed reaction is di-trans,octa-cis-undecaprenyl diphosphate + H2O = di-trans,octa-cis-undecaprenyl phosphate + phosphate + H(+). Functionally, catalyzes the dephosphorylation of undecaprenyl diphosphate (UPP). Confers resistance to bacitracin. This is Undecaprenyl-diphosphatase from Xylella fastidiosa (strain 9a5c).